The sequence spans 124 residues: MATINQLVRKPRRSKVTKSNSAALKACPQKRGVCTRVYTTTPKKPNSALRKVARVRLTNGFEVTSYIGGEGHNLQEHSVILIRGGRVKDLPGVRFHTVRGALDCAGVSDRRQARSKYGTKRPKG.

Residues 1-23 (MATINQLVRKPRRSKVTKSNSAA) are disordered. The residue at position 89 (Asp-89) is a 3-methylthioaspartic acid.

The protein belongs to the universal ribosomal protein uS12 family. In terms of assembly, part of the 30S ribosomal subunit. Contacts proteins S8 and S17. May interact with IF1 in the 30S initiation complex.

Its function is as follows. With S4 and S5 plays an important role in translational accuracy. In terms of biological role, interacts with and stabilizes bases of the 16S rRNA that are involved in tRNA selection in the A site and with the mRNA backbone. Located at the interface of the 30S and 50S subunits, it traverses the body of the 30S subunit contacting proteins on the other side and probably holding the rRNA structure together. The combined cluster of proteins S8, S12 and S17 appears to hold together the shoulder and platform of the 30S subunit. The chain is Small ribosomal subunit protein uS12 from Pseudoalteromonas translucida (strain TAC 125).